The chain runs to 675 residues: Methionine--tRNA ligase (675 aa).

A 'HIGH' region motif is present at residues 15–25; sequence PYANGSIHLGH. The Zn(2+) site is built by C146, C149, C159, and C162. A 'KMSKS' region motif is present at residues 332–336; that stretch reads KMSKS. Residue K335 participates in ATP binding. The tRNA-binding domain occupies 574-675; that stretch reads DFAKLDLRIA…AGAKPGMRVK (102 aa).

The protein belongs to the class-I aminoacyl-tRNA synthetase family. MetG type 1 subfamily. Homodimer. Zn(2+) serves as cofactor.

The protein localises to the cytoplasm. The catalysed reaction is tRNA(Met) + L-methionine + ATP = L-methionyl-tRNA(Met) + AMP + diphosphate. Its function is as follows. Is required not only for elongation of protein synthesis but also for the initiation of all mRNA translation through initiator tRNA(fMet) aminoacylation. This is Methionine--tRNA ligase from Tolumonas auensis (strain DSM 9187 / NBRC 110442 / TA 4).